The sequence spans 381 residues: Bifunctional polyhydroxybutyrate synthase / ABC transporter periplasmic binding protein (381 aa).

An N-terminal signal peptide occupies residues 1–22; it reads MSKTFARSSLCALSMTIMTAHA.

The protein belongs to the bacterial solute-binding protein PotD/PotF family.

The protein localises to the periplasm. It carries out the reaction (3R)-3-hydroxybutanoyl-CoA + [(3R)-hydroxybutanoate](n) = [(3R)-hydroxybutanoate](n+1) + CoA. In terms of biological role, catalyzes the formation of short polymers of R-3-hydroxybutyrate (cPHB). Involved in natural transformation. Probably part of the ABC transporter complex YdcSTUV. During natural transformation, may bind dsDNA and convey it to the inner membrane channel formed by YdcV. This chain is Bifunctional polyhydroxybutyrate synthase / ABC transporter periplasmic binding protein (ydcS), found in Escherichia coli (strain K12).